Reading from the N-terminus, the 570-residue chain is Trans-cinnamate:CoA ligase, peroxisomal (570 aa).

The short motif at 568–570 (ARL) is the Microbody targeting signal element.

The protein belongs to the ATP-dependent AMP-binding enzyme family. As to quaternary structure, monomer. K(+) serves as cofactor. Mostly expressed in flower organs, with highest levels in corollas and petal limbs, and, to a lesser extent, in petal tubes, sepals, pistils, stamen, stigma, anthers and ovaries. Also present at low levels in leaves, stems and roots.

Its subcellular location is the peroxisome. It catalyses the reaction (E)-4-coumarate + ATP + CoA = (E)-4-coumaroyl-CoA + AMP + diphosphate. The catalysed reaction is (E)-caffeate + ATP + CoA = (E)-caffeoyl-CoA + AMP + diphosphate. The enzyme catalyses (E)-cinnamate + ATP + CoA = (E)-cinnamoyl-CoA + AMP + diphosphate. Its pathway is phenylpropanoid metabolism; trans-cinnamate biosynthesis. The protein operates within phytoalexin biosynthesis; 3,4',5-trihydroxystilbene biosynthesis; 3,4',5-trihydroxystilbene from trans-4-coumarate: step 1/2. Functionally, involved in the biosynthesis of floral volatile benzenoid/phenylpropanoid (FVBP) scent (e.g. benzylbenzoate, phenylethylbenzoate, and methylbenzoate). Catalyzes the formation of CoA esters of cinnamic acid, and, with lower efficiency, of 4-coumaric acid and caffeic acid. The sequence is that of Trans-cinnamate:CoA ligase, peroxisomal from Petunia hybrida (Petunia).